The chain runs to 179 residues: O-acetyl-ADP-ribose deacetylase (179 aa).

Positions 1–175 constitute a Macro domain; the sequence is MTSRLQVIQG…LYARLLTQQG (175 aa). Substrate-binding positions include 11 to 12, asparagine 25, 33 to 35, and 122 to 126; these read DI, GVD, and STGVY. Aspartate 35 functions as the Proton acceptor in the catalytic mechanism.

This sequence belongs to the MacroD-type family. YmdB subfamily. Homodimer. Interacts with RNase III.

The enzyme catalyses 3''-O-acetyl-ADP-D-ribose + H2O = ADP-D-ribose + acetate + H(+). It catalyses the reaction 2''-O-acetyl-ADP-D-ribose + H2O = ADP-D-ribose + acetate + H(+). In terms of biological role, deacetylates O-acetyl-ADP ribose to yield ADP-ribose and free acetate. Down-regulates ribonuclease 3 (RNase III) activity. Acts by interacting directly with the region of the ribonuclease that is required for dimerization/activation. The polypeptide is O-acetyl-ADP-ribose deacetylase (Salmonella typhi).